The following is a 185-amino-acid chain: Ribosome-recycling factor (185 aa).

Belongs to the RRF family.

The protein localises to the cytoplasm. In terms of biological role, responsible for the release of ribosomes from messenger RNA at the termination of protein biosynthesis. May increase the efficiency of translation by recycling ribosomes from one round of translation to another. In Laribacter hongkongensis (strain HLHK9), this protein is Ribosome-recycling factor.